Consider the following 600-residue polypeptide: NADH-quinone oxidoreductase subunit C/D (600 aa).

The segment at 1 to 190 (MIDLMPKKNT…EPFFLNEQKE (190 aa)) is NADH dehydrogenase I subunit C. Residues 214–600 (EFMFLNLGPN…IDFVMSDVDR (387 aa)) form an NADH dehydrogenase I subunit D region.

It in the N-terminal section; belongs to the complex I 30 kDa subunit family. The protein in the C-terminal section; belongs to the complex I 49 kDa subunit family. In terms of assembly, NDH-1 is composed of 13 different subunits. Subunits NuoB, CD, E, F, and G constitute the peripheral sector of the complex.

It is found in the cell membrane. The enzyme catalyses a quinone + NADH + 5 H(+)(in) = a quinol + NAD(+) + 4 H(+)(out). Its function is as follows. NDH-1 shuttles electrons from NADH, via FMN and iron-sulfur (Fe-S) centers, to quinones in the respiratory chain. The immediate electron acceptor for the enzyme in this species is believed to be ubiquinone. Couples the redox reaction to proton translocation (for every two electrons transferred, four hydrogen ions are translocated across the cytoplasmic membrane), and thus conserves the redox energy in a proton gradient. The chain is NADH-quinone oxidoreductase subunit C/D from Buchnera aphidicola subsp. Acyrthosiphon pisum (strain 5A).